The chain runs to 590 residues: MQTENQVNDLYPIAVLIDELKHDEITYRLNALERLSTIALALGPERTRDELIPFLDESIDDEDEVLSALADQLGNFVDYVGGPEYAHVLLSPLENLAATEETVVRDKAVDSLNKVCICLSQEQLEQYFVPLVQRLSTAEWFTSRASSAGLYCAAYSQSENPAVKVSLRQSFSHLCHDEAPMVRRPAATNCAKFVFLVTKQEAIDEFIPLFNSLSNDDQDSVRLLSFDIMVSLAEVLKSDSEIRHYLLQPLRSFVSDSSWRTRYMVAANFVKLAKVVGPSLIKDELIKPFVLLMKDTEQEVRRAIATQIPGFCELLDKRIVLEEIIPVIQELINDPAQHVRAALGMNIGALAPQLGKEKTTEYLLPMFLELLKDENPEVRLNIISKLEVVNKVVGIELLSQSLLPAIVTLAEDKQWRVRLAIIDYIPLLAQQLGVEFFNEKMGNLCMSWLEDHVYSIREAAIKNLRKLTEIFGLEWATETIIPKFLAMRSHPNYLYRMTTIFAISEIAPALNAEVIEKQILPTLEQLVNDPIPNIRFNVAKAFEVLKPVLAAGGDSTVYEQQIIPLLEQLTKDNDPDVQYFATQALEQTND.

HEAT repeat units follow at residues 12-50 (PIAV…TRDE), 89-127 (LLSP…LEQY), 206-244 (FIPL…EIRH), 246-284 (LLQP…IKDE), 285-323 (LIKP…VLEE), 324-362 (IIPV…TTEY), 363-401 (LLPM…LSQS), 402-440 (LLPA…FNEK), 480-518 (IIPK…IEKQ), 519-551 (ILPT…VLAA), and 562-590 (IIPL…QTND).

The protein belongs to the phosphatase 2A regulatory subunit A family. In terms of assembly, PP2A exists in several trimeric forms, all of which consist of a core composed of a catalytic subunit associated with a 65 kDa (PR65) (Subunit A) and a 55 kDa (PR55) (Subunit B) regulatory subunit.

Functionally, phosphatase 2A affects a variety of biological processes in the cell such as transcription, cell cycle progression and cellular morphogenesis, and provides an initial identification of critical substrates for this phosphatase. The regulatory subunit may direct the catalytic subunit to distinct, albeit overlapping, subsets of substrates. This chain is Protein phosphatase PP2A regulatory subunit A (paa1), found in Schizosaccharomyces pombe (strain 972 / ATCC 24843) (Fission yeast).